A 310-amino-acid chain; its full sequence is HTH-type transcriptional activator TtdR (310 aa).

The 58-residue stretch at 6-63 (PLAKDLQVLVEIVHSGSFSAAAATLGQTPAFVTKRIQILENTLATTLLNRSARGVALT) folds into the HTH lysR-type domain. The segment at residues 23-42 (FSAAAATLGQTPAFVTKRIQ) is a DNA-binding region (H-T-H motif).

This sequence belongs to the LysR transcriptional regulatory family.

Functionally, positive regulator required for L-tartrate-dependent anaerobic growth on glycerol. Induces expression of the ttdA-ttdB-ygjE operon. This Escherichia coli (strain K12) protein is HTH-type transcriptional activator TtdR (ttdR).